Reading from the N-terminus, the 440-residue chain is 3-phosphoshikimate 1-carboxyvinyltransferase (440 aa).

Positions 31, 32, and 36 each coordinate 3-phosphoshikimate. Lys-31 is a phosphoenolpyruvate binding site. Phosphoenolpyruvate-binding residues include Gly-104 and Arg-133. Residues Ser-178, Gln-180, Asp-328, and Lys-355 each coordinate 3-phosphoshikimate. Gln-180 provides a ligand contact to phosphoenolpyruvate. Asp-328 acts as the Proton acceptor in catalysis. Residues Arg-359 and Arg-401 each contribute to the phosphoenolpyruvate site.

Belongs to the EPSP synthase family. Monomer.

The protein resides in the cytoplasm. It catalyses the reaction 3-phosphoshikimate + phosphoenolpyruvate = 5-O-(1-carboxyvinyl)-3-phosphoshikimate + phosphate. It participates in metabolic intermediate biosynthesis; chorismate biosynthesis; chorismate from D-erythrose 4-phosphate and phosphoenolpyruvate: step 6/7. Its function is as follows. Catalyzes the transfer of the enolpyruvyl moiety of phosphoenolpyruvate (PEP) to the 5-hydroxyl of shikimate-3-phosphate (S3P) to produce enolpyruvyl shikimate-3-phosphate and inorganic phosphate. This Thermosynechococcus vestitus (strain NIES-2133 / IAM M-273 / BP-1) protein is 3-phosphoshikimate 1-carboxyvinyltransferase.